The sequence spans 314 residues: Olfactory receptor 5D13 (314 aa).

The Extracellular portion of the chain corresponds to 1-27 (MMASERNQSSTPTFILLGFSEYPEIQV). N7 carries N-linked (GlcNAc...) asparagine glycosylation. The chain crosses the membrane as a helical span at residues 28–48 (PLFLVFLFVYTVTVVGNLGMI). Over 49–56 (IIIRLNSK) the chain is Cytoplasmic. The chain crosses the membrane as a helical span at residues 57–77 (LHTIMCFFLSHLSLTDFCFST). The Extracellular segment spans residues 78–101 (VVTPKLLENLVVEYRTISFSGCIM). A helical membrane pass occupies residues 102-122 (QFCFACIFGVTETFMLAAMAY). The Cytoplasmic segment spans residues 123-141 (DRFVAVCKPLLYTTIMSQK). Residues 142–162 (LCALLVAGSYTWGIVCSLILT) traverse the membrane as a helical segment. Residues 163–198 (YFLLDLSFCESTFINNFICDHSVIVSASYSDPYISQ) are Extracellular-facing. A helical membrane pass occupies residues 199–219 (RLCFIIAIFNEVSSLIIILTS). Topologically, residues 220 to 239 (YMLIFTTIMKMRSASGRQKT) are cytoplasmic. A helical transmembrane segment spans residues 240–260 (FSTCASHLTAITIFHGTILFL). Residues 261–273 (YCVPNPKTSSLIV) lie on the Extracellular side of the membrane. The helical transmembrane segment at 274 to 294 (TVASVFYTVAIPMLNPLIYSL) threads the bilayer. Over 295–314 (RNKDINNMFEKLVVTKLIYH) the chain is Cytoplasmic.

Belongs to the G-protein coupled receptor 1 family.

The protein localises to the cell membrane. In terms of biological role, odorant receptor. The chain is Olfactory receptor 5D13 (OR5D13) from Homo sapiens (Human).